The following is a 393-amino-acid chain: Stearoyl-[acyl-carrier-protein] 9-desaturase, chloroplastic (393 aa).

Residues Met1–Met31 constitute a chloroplast transit peptide. Positions 135, 173, 176, 226, 259, and 262 each coordinate Fe cation.

Belongs to the fatty acid desaturase type 2 family. Homodimer. The cofactor is Fe(2+).

The protein localises to the plastid. It localises to the chloroplast. The catalysed reaction is octadecanoyl-[ACP] + 2 reduced [2Fe-2S]-[ferredoxin] + O2 + 2 H(+) = (9Z)-octadecenoyl-[ACP] + 2 oxidized [2Fe-2S]-[ferredoxin] + 2 H2O. The protein operates within lipid metabolism; fatty acid metabolism. In terms of biological role, converts stearoyl-ACP to oleoyl-ACP by introduction of a cis double bond between carbons 9 and 10 of the acyl chain. This chain is Stearoyl-[acyl-carrier-protein] 9-desaturase, chloroplastic, found in Elaeis guineensis var. tenera (Oil palm).